A 1036-amino-acid chain; its full sequence is Isoleucine--tRNA ligase (1036 aa).

The short motif at 46–56 (PFATGLPHYGH) is the 'HIGH' region element. The 'KMSKS' region motif lies at 589-593 (KMSKR). Position 592 (Lys592) interacts with ATP.

Belongs to the class-I aminoacyl-tRNA synthetase family. IleS type 2 subfamily. Monomer. The cofactor is Zn(2+).

The protein localises to the cytoplasm. The enzyme catalyses tRNA(Ile) + L-isoleucine + ATP = L-isoleucyl-tRNA(Ile) + AMP + diphosphate. Functionally, catalyzes the attachment of isoleucine to tRNA(Ile). As IleRS can inadvertently accommodate and process structurally similar amino acids such as valine, to avoid such errors it has two additional distinct tRNA(Ile)-dependent editing activities. One activity is designated as 'pretransfer' editing and involves the hydrolysis of activated Val-AMP. The other activity is designated 'posttransfer' editing and involves deacylation of mischarged Val-tRNA(Ile). The protein is Isoleucine--tRNA ligase of Chlamydia trachomatis serovar A (strain ATCC VR-571B / DSM 19440 / HAR-13).